The chain runs to 409 residues: Bone morphogenetic protein 4 (409 aa).

The signal sequence occupies residues 1-19; that stretch reads MIPGNRMLMVVLLCQVLLG. Positions 20–293 are excised as a propeptide; the sequence is GASHASLIPE…ALTRRRRAKR (274 aa). Position 91 is a phosphoserine (Ser91). Residues 91-110 are disordered; it reads SGEEEEEEQMPSGGLEYPER. 4 N-linked (GlcNAc...) asparagine glycosylation sites follow: Asn144, Asn209, Asn351, and Asn366. 3 disulfides stabilise this stretch: Cys309–Cys374, Cys338–Cys406, and Cys342–Cys408.

The protein belongs to the TGF-beta family. In terms of assembly, homodimer; disulfide-linked. Interacts with GREM2. Part of a complex consisting of TWSG1 and CHRD. Interacts with the serine proteases, HTRA1 and HTRA3; the interaction with either inhibits BMP4-mediated signaling. The HTRA protease activity is required for this inhibition. Interacts with SOSTDC1. Interacts with FBN1 (via N-terminal domain) and FBN2. Interacts with type I receptor BMPR1A. Interacts with type II receptor BMPR2. Interacts with FSTL1; this interaction inhibits the activation of the BMP4/Smad1/5/8 signaling pathway. Interacts with SCUBE3. Interacts with TGFBR3.

It localises to the secreted. The protein resides in the extracellular space. It is found in the extracellular matrix. In terms of biological role, growth factor of the TGF-beta superfamily that plays essential roles in many developmental processes, including neurogenesis, vascular development, angiogenesis and osteogenesis. Acts in concert with PTHLH/PTHRP to stimulate ductal outgrowth during embryonic mammary development and to inhibit hair follicle induction. Initiates the canonical BMP signaling cascade by associating with type I receptor BMPR1A and type II receptor BMPR2. Once all three components are bound together in a complex at the cell surface, BMPR2 phosphorylates and activates BMPR1A. In turn, BMPR1A propagates signal by phosphorylating SMAD1/5/8 that travel to the nucleus and act as activators and repressors of transcription of target genes. Positively regulates the expression of odontogenic development regulator MSX1 via inducing the IPO7-mediated import of SMAD1 to the nucleus. Required for MSX1-mediated mesenchymal molar tooth bud development beyond the bud stage, via promoting Wnt signaling. Acts as a positive regulator of odontoblast differentiation during mesenchymal tooth germ formation, expression is repressed during the bell stage by MSX1-mediated inhibition of CTNNB1 signaling. Able to induce its own expression in dental mesenchymal cells and also in the neighboring dental epithelial cells via an MSX1-mediated pathway. Can also signal through non-canonical BMP pathways such as ERK/MAP kinase, PI3K/Akt, or SRC cascades. For example, induces SRC phosphorylation which, in turn, activates VEGFR2, leading to an angiogenic response. The polypeptide is Bone morphogenetic protein 4 (BMP4) (Oryctolagus cuniculus (Rabbit)).